Reading from the N-terminus, the 277-residue chain is 3-methyl-2-oxobutanoate hydroxymethyltransferase (277 aa).

Mg(2+) contacts are provided by aspartate 53 and aspartate 96. 3-methyl-2-oxobutanoate contacts are provided by residues 53-54 (DS), aspartate 96, and lysine 126. Glutamate 128 lines the Mg(2+) pocket. Glutamate 195 functions as the Proton acceptor in the catalytic mechanism.

It belongs to the PanB family. In terms of assembly, homodecamer; pentamer of dimers. Requires Mg(2+) as cofactor.

The protein resides in the cytoplasm. It catalyses the reaction 3-methyl-2-oxobutanoate + (6R)-5,10-methylene-5,6,7,8-tetrahydrofolate + H2O = 2-dehydropantoate + (6S)-5,6,7,8-tetrahydrofolate. The protein operates within cofactor biosynthesis; (R)-pantothenate biosynthesis; (R)-pantoate from 3-methyl-2-oxobutanoate: step 1/2. In terms of biological role, catalyzes the reversible reaction in which hydroxymethyl group from 5,10-methylenetetrahydrofolate is transferred onto alpha-ketoisovalerate to form ketopantoate. The chain is 3-methyl-2-oxobutanoate hydroxymethyltransferase from Chlorobium phaeobacteroides (strain BS1).